A 469-amino-acid chain; its full sequence is UDP-N-acetylmuramate--L-alanine ligase (469 aa).

Residue 112–118 (GTHGKTT) participates in ATP binding.

Belongs to the MurCDEF family.

It localises to the cytoplasm. It catalyses the reaction UDP-N-acetyl-alpha-D-muramate + L-alanine + ATP = UDP-N-acetyl-alpha-D-muramoyl-L-alanine + ADP + phosphate + H(+). Its pathway is cell wall biogenesis; peptidoglycan biosynthesis. Its function is as follows. Cell wall formation. In Herminiimonas arsenicoxydans, this protein is UDP-N-acetylmuramate--L-alanine ligase.